The sequence spans 286 residues: ATP synthase gamma chain (286 aa).

The protein belongs to the ATPase gamma chain family. In terms of assembly, F-type ATPases have 2 components, CF(1) - the catalytic core - and CF(0) - the membrane proton channel. CF(1) has five subunits: alpha(3), beta(3), gamma(1), delta(1), epsilon(1). CF(0) has three main subunits: a, b and c.

It localises to the cell membrane. Functionally, produces ATP from ADP in the presence of a proton gradient across the membrane. The gamma chain is believed to be important in regulating ATPase activity and the flow of protons through the CF(0) complex. This chain is ATP synthase gamma chain, found in Oceanobacillus iheyensis (strain DSM 14371 / CIP 107618 / JCM 11309 / KCTC 3954 / HTE831).